The primary structure comprises 315 residues: Porphobilinogen deaminase (315 aa).

At Cys242 the chain carries S-(dipyrrolylmethanemethyl)cysteine.

This sequence belongs to the HMBS family. In terms of assembly, monomer. Requires dipyrromethane as cofactor.

The catalysed reaction is 4 porphobilinogen + H2O = hydroxymethylbilane + 4 NH4(+). It functions in the pathway porphyrin-containing compound metabolism; protoporphyrin-IX biosynthesis; coproporphyrinogen-III from 5-aminolevulinate: step 2/4. In terms of biological role, tetrapolymerization of the monopyrrole PBG into the hydroxymethylbilane pre-uroporphyrinogen in several discrete steps. This chain is Porphobilinogen deaminase, found in Syntrophotalea carbinolica (strain DSM 2380 / NBRC 103641 / GraBd1) (Pelobacter carbinolicus).